A 263-amino-acid polypeptide reads, in one-letter code: ATP synthase subunit a (263 aa).

5 consecutive transmembrane segments (helical) span residues 31-51 (LDTLFFSILLGCSFCWLFYSI), 89-109 (IGSLALTLFCWIFFWNVMDLI), 133-153 (DPNATFALSISVVLITLVYTF), 205-225 (LFGNLFAGEIVFILITFLPFW), and 235-255 (AIFHILVVTLQAYVFMILTIV).

Belongs to the ATPase A chain family. As to quaternary structure, F-type ATPases have 2 components, CF(1) - the catalytic core - and CF(0) - the membrane proton channel. CF(1) has five subunits: alpha(3), beta(3), gamma(1), delta(1), epsilon(1). CF(0) has three main subunits: a(1), b(2) and c(9-12). The alpha and beta chains form an alternating ring which encloses part of the gamma chain. CF(1) is attached to CF(0) by a central stalk formed by the gamma and epsilon chains, while a peripheral stalk is formed by the delta and b chains.

Its subcellular location is the cell inner membrane. Key component of the proton channel; it plays a direct role in the translocation of protons across the membrane. In Dichelobacter nodosus (strain VCS1703A), this protein is ATP synthase subunit a.